Reading from the N-terminus, the 220-residue chain is ATP synthase subunit delta (220 aa).

The protein belongs to the ATPase delta chain family. F-type ATPases have 2 components, F(1) - the catalytic core - and F(0) - the membrane proton channel. F(1) has five subunits: alpha(3), beta(3), gamma(1), delta(1), epsilon(1). F(0) has three main subunits: a(1), b(2) and c(10-14). The alpha and beta chains form an alternating ring which encloses part of the gamma chain. F(1) is attached to F(0) by a central stalk formed by the gamma and epsilon chains, while a peripheral stalk is formed by the delta and b chains.

The protein localises to the cell inner membrane. In terms of biological role, f(1)F(0) ATP synthase produces ATP from ADP in the presence of a proton or sodium gradient. F-type ATPases consist of two structural domains, F(1) containing the extramembraneous catalytic core and F(0) containing the membrane proton channel, linked together by a central stalk and a peripheral stalk. During catalysis, ATP synthesis in the catalytic domain of F(1) is coupled via a rotary mechanism of the central stalk subunits to proton translocation. This protein is part of the stalk that links CF(0) to CF(1). It either transmits conformational changes from CF(0) to CF(1) or is implicated in proton conduction. This Gluconobacter oxydans (strain 621H) (Gluconobacter suboxydans) protein is ATP synthase subunit delta.